The sequence spans 146 residues: MKTYAQKASEVQRDWYVIDATNQTLGRLATQIATLLRGKHKPTFSPYIDGGDFVIVVNAERIRLTGRKPEQKMYYRHSNYPGGFKAVSFKQLIARHPERVLRFAVKGMLPKTRLGRRQLAKLKIYAGPKHPHAAQQPKVYEPRPRG.

The segment at 126-146 (AGPKHPHAAQQPKVYEPRPRG) is disordered.

Belongs to the universal ribosomal protein uL13 family. Part of the 50S ribosomal subunit.

In terms of biological role, this protein is one of the early assembly proteins of the 50S ribosomal subunit, although it is not seen to bind rRNA by itself. It is important during the early stages of 50S assembly. The sequence is that of Large ribosomal subunit protein uL13 from Roseiflexus castenholzii (strain DSM 13941 / HLO8).